The chain runs to 274 residues: MNRVTPDRPLSRIDGHAHAWTPRKARARFRWGVFGPTAGVAAGHTQANLISLPADWAYDMLLFCQRNPKPCPVLDVTDAGSWTTPLAEGADLRTDLPRYRVWENGELVAEPTDVVAYWRDDLVSFLIGCSFTFEWALSEAGVPMRHIEQGRNVSMYVTSRACRPAGRLHGPMVVSMRPVPPEHLAAAIRESTMLPAVHGSPVHCGDPSGLGIDDLGRPDFGDPVDAEPDDIPVFWACGVTPQAAVMASRPPFAITHAPGQMFLTDARDEQYRVA.

Belongs to the D-glutamate cyclase family.

This Streptomyces avermitilis (strain ATCC 31267 / DSM 46492 / JCM 5070 / NBRC 14893 / NCIMB 12804 / NRRL 8165 / MA-4680) protein is Putative hydro-lyase SAV_6940.